The following is a 394-amino-acid chain: E3 ubiquitin-protein ligase RNF149 (394 aa).

The first 31 residues, 1-31 (MAARRRPAAGVGARDALAVLALALCTPGVGG), serve as a signal peptide directing secretion. N-linked (GlcNAc...) asparagine glycans are attached at residues Asn-51 and Asn-141. A PA domain is found at 66-171 (SSLREERQGL…PKGREIFDLV (106 aa)). The helical transmembrane segment at 197–217 (VVFVAIAFITMMIISLAWLIF) threads the bilayer. The RING-type; atypical zinc-finger motif lies at 265–306 (CAVCIENFKVKDVIRILPCKHIFHRICIDPWLLDHRTCPMCK). Positions 321–394 (DTQELPTPEA…SEPQHGGSIC (74 aa)) are disordered. Thr-327 carries the post-translational modification Phosphothreonine. Asn-339 carries N-linked (GlcNAc...) asparagine glycosylation. Phosphoserine occurs at positions 341 and 344. Low complexity predominate over residues 352-362 (SNLPSSSSSES).

It is found in the membrane. The catalysed reaction is S-ubiquitinyl-[E2 ubiquitin-conjugating enzyme]-L-cysteine + [acceptor protein]-L-lysine = [E2 ubiquitin-conjugating enzyme]-L-cysteine + N(6)-ubiquitinyl-[acceptor protein]-L-lysine.. It functions in the pathway protein modification; protein ubiquitination. Its function is as follows. E3 ubiquitin-protein ligase. Ubiquitinates BRAF, inducing its proteasomal degradation. The polypeptide is E3 ubiquitin-protein ligase RNF149 (Rnf149) (Mus musculus (Mouse)).